Here is a 645-residue protein sequence, read N- to C-terminus: Sentrin-specific protease 1 (645 aa).

Positions methionine 1–methionine 200 are interaction with CCAR2. Phosphoserine occurs at positions 57, 117, and 157. The tract at residues glutamine 92–serine 117 is disordered. Over residues arginine 99–serine 117 the composition is skewed to low complexity. Positions proline 171 to arginine 177 match the Nuclear localization signal motif. A disordered region spans residues lysine 285–serine 313. Protease regions lie at residues leucine 451 to cysteine 614 and leucine 451 to isoleucine 615. Residues histidine 534 and aspartate 551 contribute to the active site. A Nuclear localization signal motif is present at residues lysine 575–lysine 578. Cysteine 604 acts as the Nucleophile in catalysis. The Nuclear localization signal motif lies at proline 629–methionine 635. The Nuclear export signal motif lies at valine 636–leucine 645.

It belongs to the peptidase C48 family. Interacts with RBM33; promoting ALKBH5 desumoylation and subsequent activation.

The protein localises to the nucleus. It localises to the cytoplasm. Functionally, protease that catalyzes two essential functions in the SUMO pathway. The first is the hydrolysis of an alpha-linked peptide bond at the C-terminal end of the small ubiquitin-like modifier (SUMO) propeptides, SUMO1, SUMO2 and SUMO3 leading to the mature form of the proteins. The second is the deconjugation of SUMO1, SUMO2 and SUMO3 from targeted proteins, by cleaving an epsilon-linked peptide bond between the C-terminal glycine of the mature SUMO and the lysine epsilon-amino group of the target protein. Deconjugates SUMO1 from HIPK2. Deconjugates SUMO1 from HDAC1 and BHLHE40/DEC1, which decreases its transcriptional repression activity. Deconjugates SUMO1 from CLOCK, which decreases its transcriptional activation activity. Deconjugates SUMO2 from MTA1. Inhibits N(6)-methyladenosine (m6A) RNA methylation by mediating SUMO1 deconjugation from METTL3 and ALKBH5: METTL3 inhibits the m6A RNA methyltransferase activity, while ALKBH5 desumoylation promotes m6A demethylation. Desumoylates CCAR2 which decreases its interaction with SIRT1. Deconjugates SUMO1 from GPS2. In Pongo abelii (Sumatran orangutan), this protein is Sentrin-specific protease 1 (SENP1).